Reading from the N-terminus, the 162-residue chain is MTKETYVSATAVVSGSFLSGSMMSLSALVIPLFLDTIDDGPQLLRQWARLYHYGSIYMPALCVATCGIYGYVALSKRAAISPLWSPYVLAAVSTLAMVPFTWWVMVPTNNTLFGLHRSAESTELGVVQVLVVKWAWLHVVRSLYPLFGAFLGFRALIRELRT.

Helical transmembrane passes span 17 to 37, 54 to 74, and 86 to 106; these read FLSG…LDTI, GSIY…YVAL, and PYVL…WVMV. An N-linked (GlcNAc...) asparagine glycan is attached at asparagine 109. The chain crosses the membrane as a helical span at residues 130-150; the sequence is LVVKWAWLHVVRSLYPLFGAF.

The protein belongs to the anthrone oxygenase family.

It localises to the membrane. It catalyses the reaction emodin anthrone + O2 = emodin + H2O + H(+). Its pathway is secondary metabolite biosynthesis. In terms of biological role, anthrone oxygenase; part of the gene cluster that mediates the biosynthesis of the tetrahydroxanthone dimer neosartorin, which exhibits antibacterial activity. The two different monomeric units appear to be synthesized by the same set of enzymes, among which the Baeyer-Villiger monooxygenase nsrF is the key enzyme for the divergence of the biosynthetic routes. The pathway begins with the synthesis of atrochrysone thioester by the polyketide synthase nsrB. The atrochrysone carboxyl ACP thioesterase nsrC then breaks the thioester bond and releases the atrochrysone carboxylic acid from AacuL. Atrochrysone carboxylic acid is decarboxylated by the decarboxylase nsrE, and oxidized by the anthrone oxygenase nsrD to yield emodin. Emodin is then reduced to emodin hydroquinone by the oxidoreductase nsrR. A-ring reduction by the short chain dehydrogenase nsrJ, dehydration by the scytalone dehydratase-like protein nsrI and probable spontaneous re-oxidation, results in overall deoxygenation to chrysophanol. The Baeyer-Villiger monooxygenase nsrF accepts chrysophanol as a substrate to insert one oxygen atom at two different positions to yield the precursors of both monomric units. NsrF is promiscuous/flexible in interacting with the 2 (non methylated and methylated) aromatic rings of chrysophanol, thus diverging the biosynthetic pathway at this point. After the hydrolysis of the lactones, methylesterification by the methyltransferase nsrG yields respectively moniliphenone and 2,2',6'-trihydroxy-4-methyl-6-methoxya-cyldiphenylmethanone. The next steps are the hydroxylation by the FAD-dependent monooxygenase nsrK, followed by isomerization by the monooxygenase nsrQ. The short chain dehydrogenase/reductase nsrO then catalyzes the C-5 ketoreduction to give the xanthone skeleton of blennolide C and 5-acetylblennolide A. The acetyltransferase nsrL has a strict substrate specificity and uses only blennolide A but not blennolide C to yield 5-acetylblennolide A as the single-acetylated product. In the final step of the biosynthesis, the heterodimerization of the 2 xanthones, blennolide C and 5-acetylblennolide A, is catalyzed by the cytochrome P450 monooxygenase nsrP. NsrP can utilize at least three different xanthones as its substrates to perform the dimerization reaction. The chain is Anthrone oxygenase nsrD from Aspergillus novofumigatus (strain IBT 16806).